Consider the following 590-residue polypeptide: Aspartate--tRNA(Asp/Asn) ligase (590 aa).

Glutamate 182 is a binding site for L-aspartate. The interval 206 to 209 is aspartate; the sequence is QLFK. Residue arginine 228 participates in L-aspartate binding. ATP-binding positions include 228–230 and glutamine 237; that span reads RDE. Histidine 454 contributes to the L-aspartate binding site. Glutamate 488 provides a ligand contact to ATP. Position 495 (arginine 495) interacts with L-aspartate. Residue 540-543 participates in ATP binding; the sequence is GLDR.

The protein belongs to the class-II aminoacyl-tRNA synthetase family. Type 1 subfamily. As to quaternary structure, homodimer.

It is found in the cytoplasm. The enzyme catalyses tRNA(Asx) + L-aspartate + ATP = L-aspartyl-tRNA(Asx) + AMP + diphosphate. Its function is as follows. Aspartyl-tRNA synthetase with relaxed tRNA specificity since it is able to aspartylate not only its cognate tRNA(Asp) but also tRNA(Asn). Reaction proceeds in two steps: L-aspartate is first activated by ATP to form Asp-AMP and then transferred to the acceptor end of tRNA(Asp/Asn). This Halothermothrix orenii (strain H 168 / OCM 544 / DSM 9562) protein is Aspartate--tRNA(Asp/Asn) ligase.